The chain runs to 89 residues: Small ribosomal subunit protein uS15 (89 aa).

It belongs to the universal ribosomal protein uS15 family. As to quaternary structure, part of the 30S ribosomal subunit. Forms a bridge to the 50S subunit in the 70S ribosome, contacting the 23S rRNA.

Its function is as follows. One of the primary rRNA binding proteins, it binds directly to 16S rRNA where it helps nucleate assembly of the platform of the 30S subunit by binding and bridging several RNA helices of the 16S rRNA. Functionally, forms an intersubunit bridge (bridge B4) with the 23S rRNA of the 50S subunit in the ribosome. This is Small ribosomal subunit protein uS15 from Vibrio atlanticus (strain LGP32) (Vibrio splendidus (strain Mel32)).